The chain runs to 74 residues: Small ribosomal subunit protein bS18 (74 aa).

This sequence belongs to the bacterial ribosomal protein bS18 family. In terms of assembly, part of the 30S ribosomal subunit. Forms a tight heterodimer with protein bS6.

Binds as a heterodimer with protein bS6 to the central domain of the 16S rRNA, where it helps stabilize the platform of the 30S subunit. This Natranaerobius thermophilus (strain ATCC BAA-1301 / DSM 18059 / JW/NM-WN-LF) protein is Small ribosomal subunit protein bS18.